The chain runs to 246 residues: Exosome complex component Rrp41 (246 aa).

Belongs to the RNase PH family. Rrp41 subfamily. Component of the archaeal exosome complex. Forms a hexameric ring-like arrangement composed of 3 Rrp41-Rrp42 heterodimers. The hexameric ring associates with a trimer of Rrp4 and/or Csl4 subunits.

It localises to the cytoplasm. Catalytic component of the exosome, which is a complex involved in RNA degradation. Has 3'-&gt;5' exoribonuclease activity. Can also synthesize heteromeric RNA-tails. This is Exosome complex component Rrp41 from Pyrobaculum arsenaticum (strain DSM 13514 / JCM 11321 / PZ6).